A 215-amino-acid chain; its full sequence is Large ribosomal subunit protein uL4c (215 aa).

Residues 51–87 (QKQGTVSTKTRSEVRGGGKKPWRQKGTGRARAGSSRS) form a disordered region. Positions 67-78 (GGKKPWRQKGTG) are enriched in basic residues.

Belongs to the universal ribosomal protein uL4 family. As to quaternary structure, part of the 50S ribosomal subunit.

The protein resides in the plastid. The protein localises to the chloroplast. Its function is as follows. Probably binds the 23S rRNA. This Thalassiosira pseudonana (Marine diatom) protein is Large ribosomal subunit protein uL4c (rpl4).